Reading from the N-terminus, the 170-residue chain is Thialysine N-epsilon-acetyltransferase (170 aa).

The region spanning 4-166 (VLIREAKEGD…FRFEGEAMRE (163 aa)) is the N-acetyltransferase domain. Residue 27 to 28 (YE) coordinates substrate. K29 is subject to N6-acetyllysine. Residue E92 coordinates substrate. Acetyl-CoA-binding positions include 94–96 (IYV), 102–107 (GQGIGS), 133–135 (NKK), and Y140. Residue Y140 is the Proton donor of the active site. E152 lines the substrate pocket.

It belongs to the acetyltransferase family. As to quaternary structure, homodimer.

The protein resides in the cytoplasm. It catalyses the reaction S-(2-aminoethyl)-L-cysteine + acetyl-CoA = S-(2-acetamidoethyl)-L-cysteine + CoA + H(+). The enzyme catalyses an alkane-alpha,omega-diamine + acetyl-CoA = an N-acetylalkane-alpha,omega-diamine + CoA + H(+). Catalyzes the N-acetylation of the amino acid thialysine (S-(2-aminoethyl)-L-cysteine), a L-lysine analog with the 4-methylene group substituted with a sulfur. May also catalyze acetylation of polyamines, such as norspermidine, spermidine or spermine. However, ability to acetylate polyamines is weak, suggesting that it does not act as a diamine acetyltransferase in vivo. The chain is Thialysine N-epsilon-acetyltransferase from Sus scrofa (Pig).